The chain runs to 414 residues: Nuclear pore complex-interacting protein family member B7 (414 aa).

Residues 1–18 (MRLRFWLLIWLLLGFISH) form the signal peptide. Asn111 carries an N-linked (GlcNAc...) asparagine glycan. 2 disordered regions span residues 242-262 (RMGR…NSLS) and 335-402 (SPLP…LRTR). Residues 252–262 (QQHSITDNSLS) show a composition bias toward polar residues. The span at 356 to 384 (EVEKPPKPKRWRVDEVEQSPKPKRQREAE) shows a compositional bias: basic and acidic residues. A compositionally biased stretch (basic residues) spans 390-402 (KPKRRRLSKLRTR).

The protein belongs to the NPIP family.

Its subcellular location is the secreted. The chain is Nuclear pore complex-interacting protein family member B7 (NPIPB7) from Homo sapiens (Human).